A 251-amino-acid polypeptide reads, in one-letter code: 5'-nucleotidase SurE (251 aa).

Aspartate 8, aspartate 9, serine 42, and asparagine 94 together coordinate a divalent metal cation.

Belongs to the SurE nucleotidase family. A divalent metal cation serves as cofactor.

It is found in the cytoplasm. The catalysed reaction is a ribonucleoside 5'-phosphate + H2O = a ribonucleoside + phosphate. Functionally, nucleotidase that shows phosphatase activity on nucleoside 5'-monophosphates. This chain is 5'-nucleotidase SurE, found in Hydrogenovibrio crunogenus (strain DSM 25203 / XCL-2) (Thiomicrospira crunogena).